The chain runs to 384 residues: Lipid-A-disaccharide synthase (384 aa).

It belongs to the LpxB family.

It carries out the reaction a lipid X + a UDP-2-N,3-O-bis[(3R)-3-hydroxyacyl]-alpha-D-glucosamine = a lipid A disaccharide + UDP + H(+). Its pathway is bacterial outer membrane biogenesis; LPS lipid A biosynthesis. Condensation of UDP-2,3-diacylglucosamine and 2,3-diacylglucosamine-1-phosphate to form lipid A disaccharide, a precursor of lipid A, a phosphorylated glycolipid that anchors the lipopolysaccharide to the outer membrane of the cell. The polypeptide is Lipid-A-disaccharide synthase (Cellvibrio japonicus (strain Ueda107) (Pseudomonas fluorescens subsp. cellulosa)).